A 506-amino-acid chain; its full sequence is Lysine--tRNA ligase (506 aa).

2 residues coordinate Mg(2+): glutamate 416 and glutamate 423.

This sequence belongs to the class-II aminoacyl-tRNA synthetase family. As to quaternary structure, homodimer. It depends on Mg(2+) as a cofactor.

It localises to the cytoplasm. The enzyme catalyses tRNA(Lys) + L-lysine + ATP = L-lysyl-tRNA(Lys) + AMP + diphosphate. The chain is Lysine--tRNA ligase from Sodalis glossinidius (strain morsitans).